The following is a 178-amino-acid chain: uncharacterized protein (178 aa).

Residues 52–177 (HIAIEDRAHQ…RRLPASFLST (126 aa)) enclose the MSP domain.

This is an uncharacterized protein from Caenorhabditis elegans.